The chain runs to 375 residues: MPSGSGFQNIEEAGEKARRRDDWIAISNFHPGWFSVNMGTGITAILLQNLPYQFPGLHYIAVVLFVLNVIIFFFFLTISITRYALWPEKFKAMLAHPAHSMLLGTFPMGFATIINCIIFICVPVWGDWAARFAWGLWWVDATVSIAICYFVPFMLMTKHTSSLETMTAAWLLPIVAPVVAAASGGVVADALKNDTHALITILVCYVMWGSAVPLAMVILVIYFQRLALHKLVPRAAIVSALLPIGPLGQGGFGLMQLGVVARRVFPRLDFLAPIAGEIFYVMGAFIAMIMWGFGLIWLWFALASFTRGKFYFNIGWWAFTFPLGVFTTATTQMGKEFNSVVFDVLGTFFSIVVAAMWVMVFALTVYKSCTKELFK.

Over 1-25 (MPSGSGFQNIEEAGEKARRRDDWIA) the chain is Cytoplasmic. The chain crosses the membrane as a helical span at residues 26–46 (ISNFHPGWFSVNMGTGITAIL). Residues 47–59 (LQNLPYQFPGLHY) lie on the Extracellular side of the membrane. Residues 60–80 (IAVVLFVLNVIIFFFFLTISI) form a helical membrane-spanning segment. Over 81–101 (TRYALWPEKFKAMLAHPAHSM) the chain is Cytoplasmic. Residues 102-122 (LLGTFPMGFATIINCIIFICV) traverse the membrane as a helical segment. Residues 123 to 135 (PVWGDWAARFAWG) lie on the Extracellular side of the membrane. Residues 136 to 156 (LWWVDATVSIAICYFVPFMLM) traverse the membrane as a helical segment. Over 157-167 (TKHTSSLETMT) the chain is Cytoplasmic. The chain crosses the membrane as a helical span at residues 168–188 (AAWLLPIVAPVVAAASGGVVA). Residues 189-200 (DALKNDTHALIT) lie on the Extracellular side of the membrane. N-linked (GlcNAc...) asparagine glycosylation occurs at asparagine 193. A helical transmembrane segment spans residues 201 to 221 (ILVCYVMWGSAVPLAMVILVI). At 222–234 (YFQRLALHKLVPR) the chain is on the cytoplasmic side. Residues 235 to 255 (AAIVSALLPIGPLGQGGFGLM) form a helical membrane-spanning segment. The Extracellular segment spans residues 256–277 (QLGVVARRVFPRLDFLAPIAGE). The chain crosses the membrane as a helical span at residues 278 to 298 (IFYVMGAFIAMIMWGFGLIWL). Over 299 to 309 (WFALASFTRGK) the chain is Cytoplasmic. The helical transmembrane segment at 310 to 330 (FYFNIGWWAFTFPLGVFTTAT) threads the bilayer. The Extracellular segment spans residues 331 to 343 (TQMGKEFNSVVFD). Residues 344 to 364 (VLGTFFSIVVAAMWVMVFALT) form a helical membrane-spanning segment. The Cytoplasmic segment spans residues 365–375 (VYKSCTKELFK).

Belongs to the tellurite-resistance/dicarboxylate transporter (TDT) family.

The protein resides in the cell membrane. In terms of biological role, sulphite efflux pump required for the secretion of sulphite as a reducing agent. In the presence of sulphite, cystine in keratin is directly cleaved to cysteine and S-sulphocysteine, and thereby, reduced proteins become accessible to hydrolysis by a variety of secreted endo- and exoproteases. Excretion of sulphite mediated by an efflux pump also represents a detoxification pathway for dermatophytes during infection of the epidermal stratum corneum, hair and nails, which are rich in cysteine. The polypeptide is Sulfite efflux pump SSU1 (SSU1) (Arthroderma otae (strain ATCC MYA-4605 / CBS 113480) (Microsporum canis)).